We begin with the raw amino-acid sequence, 462 residues long: uncharacterized protein (462 aa).

2 helical membrane passes run 12–32 and 257–277; these read WWWL…APTV and GLCV…LELV.

The protein belongs to the HHV-5 US29 protein family.

It localises to the host membrane. This is an uncharacterized protein from Homo sapiens (Human).